Consider the following 67-residue polypeptide: Protein AaeX (67 aa).

2 helical membrane-spanning segments follow: residues 3–23 and 43–63; these read LFPV…ELLL and FVWH…YLIS.

The protein belongs to the AaeX family.

The protein localises to the cell membrane. This is Protein AaeX from Escherichia coli O1:K1 / APEC.